The sequence spans 281 residues: Insulin-like growth factor-binding protein 2 (281 aa).

An N-terminal signal peptide occupies residues methionine 1–serine 21. The IGFBP N-terminal domain maps to valine 23–arginine 106. Disulfide bonds link cysteine 27–cysteine 56, cysteine 30–cysteine 58, cysteine 38–cysteine 59, cysteine 47–cysteine 62, cysteine 70–cysteine 83, and cysteine 77–cysteine 103. Disordered stretches follow at residues arginine 107–aspartate 127 and proline 139–arginine 180. The segment covering valine 156 to lysine 176 has biased composition (basic and acidic residues). The Thyroglobulin type-1 domain maps to arginine 180 to cysteine 262. Disulfide bonds link cysteine 183–cysteine 217, cysteine 228–cysteine 239, and cysteine 241–cysteine 262. The Cell attachment site signature appears at arginine 257–aspartate 259.

As to quaternary structure, interacts with igf1 and igf2.

The protein resides in the secreted. Its function is as follows. IGF-binding proteins prolong the half-life of the IGFs and have been shown to either inhibit or stimulate the growth promoting effects of the IGFs on cell culture. They alter the interaction of IGFs with their cell surface receptors. This chain is Insulin-like growth factor-binding protein 2 (igfbp2), found in Xenopus laevis (African clawed frog).